A 184-amino-acid polypeptide reads, in one-letter code: Large ribosomal subunit protein uL5 (184 aa).

Belongs to the universal ribosomal protein uL5 family. As to quaternary structure, component of the large ribosomal subunit. Interacts with Fmr1 to form the RNA-induced silencing complex (RISC), a ribonucleoprotein (RNP) complex involved in translation regulation, other components of the complex are RpL5, Rm62, AGO2 and Dcr-1.

It localises to the nucleus. It is found in the cytoplasm. Its function is as follows. Component of the ribosome, a large ribonucleoprotein complex responsible for the synthesis of proteins in the cell. The small ribosomal subunit (SSU) binds messenger RNAs (mRNAs) and translates the encoded message by selecting cognate aminoacyl-transfer RNA (tRNA) molecules. The large subunit (LSU) contains the ribosomal catalytic site termed the peptidyl transferase center (PTC), which catalyzes the formation of peptide bonds, thereby polymerizing the amino acids delivered by tRNAs into a polypeptide chain. The nascent polypeptides leave the ribosome through a tunnel in the LSU and interact with protein factors that function in enzymatic processing, targeting, and the membrane insertion of nascent chains at the exit of the ribosomal tunnel. In Drosophila melanogaster (Fruit fly), this protein is Large ribosomal subunit protein uL5 (RpL11).